The sequence spans 463 residues: D-inositol 3-phosphate glycosyltransferase (463 aa).

His-40 contributes to the 1D-myo-inositol 3-phosphate binding site. UDP-N-acetyl-alpha-D-glucosamine-binding positions include 46-47 (QP) and Gly-54. 1D-myo-inositol 3-phosphate-binding positions include 51–56 (DAGGMN), Lys-109, Tyr-142, Thr-166, and Arg-186. UDP-N-acetyl-alpha-D-glucosamine-binding residues include Arg-260, Lys-265, and Gln-318. Phe-327, His-328, and Val-330 together coordinate Mg(2+). Glu-340 and Glu-348 together coordinate UDP-N-acetyl-alpha-D-glucosamine. Thr-354 contacts Mg(2+). The interval 443–463 (VRDPVAARKPRRWTARRGVGA) is disordered.

The protein belongs to the glycosyltransferase group 1 family. MshA subfamily. In terms of assembly, homodimer.

It carries out the reaction 1D-myo-inositol 3-phosphate + UDP-N-acetyl-alpha-D-glucosamine = 1D-myo-inositol 2-acetamido-2-deoxy-alpha-D-glucopyranoside 3-phosphate + UDP + H(+). Its function is as follows. Catalyzes the transfer of a N-acetyl-glucosamine moiety to 1D-myo-inositol 3-phosphate to produce 1D-myo-inositol 2-acetamido-2-deoxy-glucopyranoside 3-phosphate in the mycothiol biosynthesis pathway. The protein is D-inositol 3-phosphate glycosyltransferase of Mycobacterium ulcerans (strain Agy99).